A 483-amino-acid chain; its full sequence is Regulatory protein ViaA (483 aa).

Belongs to the ViaA family. In terms of assembly, homodimer. Interacts with RavA.

The protein resides in the cytoplasm. Component of the RavA-ViaA chaperone complex, which may act on the membrane to optimize the function of some of the respiratory chains. ViaA stimulates the ATPase activity of RavA. This chain is Regulatory protein ViaA, found in Escherichia coli O1:K1 / APEC.